The chain runs to 333 residues: Ornithine carbamoyltransferase (333 aa).

Residues Ser-56–Thr-59, Arg-107, and His-134–Gln-137 each bind carbamoyl phosphate. L-ornithine-binding positions include Asn-167, Asp-231, and Ser-235–Met-236. Carbamoyl phosphate is bound by residues Cys-273–Leu-274 and Arg-318.

It belongs to the aspartate/ornithine carbamoyltransferase superfamily. OTCase family.

It localises to the cytoplasm. It carries out the reaction carbamoyl phosphate + L-ornithine = L-citrulline + phosphate + H(+). It participates in amino-acid degradation; L-arginine degradation via ADI pathway; carbamoyl phosphate from L-arginine: step 2/2. Functionally, reversibly catalyzes the transfer of the carbamoyl group from carbamoyl phosphate (CP) to the N(epsilon) atom of ornithine (ORN) to produce L-citrulline. In Clostridium botulinum (strain ATCC 19397 / Type A), this protein is Ornithine carbamoyltransferase.